The chain runs to 418 residues: Cell division protein FtsA (418 aa).

It belongs to the FtsA/MreB family. Self-interacts. Interacts with FtsZ.

It is found in the cell inner membrane. Its function is as follows. Cell division protein that is involved in the assembly of the Z ring. May serve as a membrane anchor for the Z ring. The polypeptide is Cell division protein FtsA (Buchnera aphidicola subsp. Schizaphis graminum (strain Sg)).